The sequence spans 613 residues: Putative two-component response regulator ARR21 (613 aa).

Positions 17–131 constitute a Response regulatory domain; that stretch reads NVMVVDDDHV…DLTKIYQFAL (115 aa). Aspartate 68 carries the 4-aspartylphosphate modification. The span at 178 to 195 shows a compositional bias: polar residues; it reads KSDSRTVNSTNGSCVSTD. The tract at residues 178–223 is disordered; that stretch reads KSDSRTVNSTNGSCVSTDGSRKNRKRKPNGGPSDDGESMSQPAKKK. Residues 221-224 carry the Nuclear localization signal motif; the sequence is KKKK. The myb-like GARP DNA-binding region spans 224 to 274; the sequence is KIQWTDSLHDLFLQAIRHIGLDKAVPKKILAFMSVPYLTRENVASHLQKYR.

It belongs to the ARR family. Type-B subfamily. As to quaternary structure, binds the target DNA as a monomer. Post-translationally, two-component system major event consists of a His-to-Asp phosphorelay between a sensor histidine kinase (HK) and a response regulator (RR). In plants, the His-to-Asp phosphorelay involves an additional intermediate named Histidine-containing phosphotransfer protein (HPt). This multistep phosphorelay consists of a His-Asp-His-Asp sequential transfer of a phosphate group between first a His and an Asp of the HK protein, followed by the transfer to a conserved His of the HPt protein and finally the transfer to an Asp in the receiver domain of the RR protein. Mainly expressed in siliques. Also found in germinating seedlings, stems, flowers and roots, but not in rosette leaves.

The protein localises to the nucleus. Its function is as follows. Putative transcriptional activator that binds specifically to the DNA sequence 5'-[AG]GATT-3'. Functions as a response regulator involved in His-to-Asp phosphorelay signal transduction system. Phosphorylation of the Asp residue in the receiver domain activates the ability of the protein to promote the transcription of target genes. Could directly activate some type-A response regulators in response to cytokinins. The protein is Putative two-component response regulator ARR21 (ARR21) of Arabidopsis thaliana (Mouse-ear cress).